We begin with the raw amino-acid sequence, 301 residues long: NADH-cytochrome b5 reductase 3 (301 aa).

Residue glycine 2 is the site of N-myristoyl glycine attachment. An FAD-binding FR-type domain is found at aspartate 40–glutamine 152. Lysine 42 is subject to N6-acetyllysine. The residue at position 43 (tyrosine 43) is a Phosphotyrosine. Position 50 is an N6-acetyllysine (lysine 50). Residues arginine 92, proline 93, tyrosine 94, valine 109, lysine 111, and phenylalanine 114 each contribute to the FAD site. The residue at position 120 (lysine 120) is an N6-acetyllysine. Residues lysine 126, methionine 127, serine 128, and threonine 185 each contribute to the FAD site.

This sequence belongs to the flavoprotein pyridine nucleotide cytochrome reductase family. As to quaternary structure, component of a complex composed of cytochrome b5, NADH-cytochrome b5 reductase (CYB5R3) and MTARC2. Interacts with MTLN; the interaction is required to maintain cellular lipid composition and leads to stimulation of mitochondrial respiratory complex I activity. FAD serves as cofactor.

It is found in the endoplasmic reticulum membrane. The protein resides in the mitochondrion outer membrane. It carries out the reaction 2 Fe(III)-[cytochrome b5] + NADH = 2 Fe(II)-[cytochrome b5] + NAD(+) + H(+). Functionally, catalyzes the reduction of two molecules of cytochrome b5 using NADH as the electron donor. This is NADH-cytochrome b5 reductase 3 (CYB5R3) from Bos taurus (Bovine).